The sequence spans 166 residues: Ureidoglycolate lyase (166 aa).

This sequence belongs to the ureidoglycolate lyase family. In terms of assembly, homodimer. The cofactor is Ni(2+).

It carries out the reaction (S)-ureidoglycolate = urea + glyoxylate. It functions in the pathway nitrogen metabolism; (S)-allantoin degradation. Functionally, catalyzes the catabolism of the allantoin degradation intermediate (S)-ureidoglycolate, generating urea and glyoxylate. Involved in the utilization of allantoin as nitrogen source. The protein is Ureidoglycolate lyase of Rhizobium leguminosarum bv. trifolii (strain WSM2304).